Reading from the N-terminus, the 380-residue chain is Erythronate-4-phosphate dehydrogenase (380 aa).

The substrate site is built by S45 and T66. An intrachain disulfide couples C65 to C90. NAD(+) contacts are provided by residues 126 to 127 (QV), D146, T175, 206 to 208 (ASR), and D232. Residue R208 is part of the active site. E237 is a catalytic residue. H254 (proton donor) is an active-site residue. Position 257 (G257) interacts with NAD(+). Residue Y258 coordinates substrate.

Belongs to the D-isomer specific 2-hydroxyacid dehydrogenase family. PdxB subfamily. In terms of assembly, homodimer.

The protein resides in the cytoplasm. It carries out the reaction 4-phospho-D-erythronate + NAD(+) = (R)-3-hydroxy-2-oxo-4-phosphooxybutanoate + NADH + H(+). It functions in the pathway cofactor biosynthesis; pyridoxine 5'-phosphate biosynthesis; pyridoxine 5'-phosphate from D-erythrose 4-phosphate: step 2/5. In terms of biological role, catalyzes the oxidation of erythronate-4-phosphate to 3-hydroxy-2-oxo-4-phosphonooxybutanoate. This is Erythronate-4-phosphate dehydrogenase from Pseudomonas aeruginosa (strain ATCC 15692 / DSM 22644 / CIP 104116 / JCM 14847 / LMG 12228 / 1C / PRS 101 / PAO1).